The following is a 247-amino-acid chain: Ribosomal RNA small subunit methyltransferase G (247 aa).

S-adenosyl-L-methionine contacts are provided by G86, L91, and R154.

It belongs to the methyltransferase superfamily. RNA methyltransferase RsmG family.

Its subcellular location is the cytoplasm. Functionally, specifically methylates the N7 position of a guanine in 16S rRNA. In Leptospira biflexa serovar Patoc (strain Patoc 1 / Ames), this protein is Ribosomal RNA small subunit methyltransferase G.